The sequence spans 429 residues: RNA-binding protein BRN2 (429 aa).

3 RRM domains span residues 12-93 (VKLF…YADG), 100-180 (HKLF…WADT), and 330-408 (ANLF…LKRD). Residues 410 to 429 (GQQQQQQQSKNPLFNGLLNS) form a disordered region. A compositionally biased stretch (polar residues) spans 418–429 (SKNPLFNGLLNS).

In terms of tissue distribution, expressed in roots, stems, flowers and siliques.

The protein localises to the cytoplasm. In terms of biological role, RNA-binding protein involved in the regulation of flowering time. Acts as a repressor of the activity of SOC1, a transcriptional activator of flowering time. Binds to the 3'-UTR of SOC1 mRNA in the cytoplasm and participates in SOC1 mRNA decay, mediated by the distal region of the SOC1 3'-UTR. This chain is RNA-binding protein BRN2, found in Arabidopsis thaliana (Mouse-ear cress).